A 122-amino-acid polypeptide reads, in one-letter code: Cytochrome c3 hydrogenase large chain (122 aa).

Fe cation serves as cofactor.

The enzyme catalyses 2 Fe(III)-[cytochrome c3] + H2 = 2 Fe(II)-[cytochrome c3] + 2 H(+). The chain is Cytochrome c3 hydrogenase large chain (hoxG) from Acidithiobacillus ferrooxidans (Thiobacillus ferrooxidans).